A 55-amino-acid chain; its full sequence is Putative virulence-regulating protein PA2146 (55 aa).

Residues Met1–Asn55 are disordered. 2 stretches are compositionally biased toward basic and acidic residues: residues Phe11–Lys23 and Asp36–Lys45.

It belongs to the con-10 family.

Its function is as follows. May be involved in the regulation of the production of pyocyanine, one of the major virulence factors secreted by P.aeruginosa, and other virulence factors. The protein is Putative virulence-regulating protein PA2146 of Pseudomonas aeruginosa (strain ATCC 15692 / DSM 22644 / CIP 104116 / JCM 14847 / LMG 12228 / 1C / PRS 101 / PAO1).